A 98-amino-acid polypeptide reads, in one-letter code: DNA-directed RNA polymerase subunit omega (98 aa).

This sequence belongs to the RNA polymerase subunit omega family. As to quaternary structure, the RNAP catalytic core consists of 2 alpha, 1 beta, 1 beta' and 1 omega subunit. When a sigma factor is associated with the core the holoenzyme is formed, which can initiate transcription.

The catalysed reaction is RNA(n) + a ribonucleoside 5'-triphosphate = RNA(n+1) + diphosphate. In terms of biological role, promotes RNA polymerase assembly. Latches the N- and C-terminal regions of the beta' subunit thereby facilitating its interaction with the beta and alpha subunits. In Tropheryma whipplei (strain Twist) (Whipple's bacillus), this protein is DNA-directed RNA polymerase subunit omega.